The primary structure comprises 248 residues: Probable transcriptional regulatory protein BBta_6910 (248 aa).

Belongs to the TACO1 family.

The protein localises to the cytoplasm. This is Probable transcriptional regulatory protein BBta_6910 from Bradyrhizobium sp. (strain BTAi1 / ATCC BAA-1182).